Reading from the N-terminus, the 412-residue chain is Adenosine receptor A2a (412 aa).

Over 1–7 (MSTMGSW) the chain is Extracellular. Residues 8-32 (VYITVELAIAVLAILGNVLVCWAVW) traverse the membrane as a helical segment. The Cytoplasmic portion of the chain corresponds to 33–42 (LNSNLQNVTN). A helical membrane pass occupies residues 43-66 (YFVVSLAAADIAVGVLAIPFAITI). At 67–77 (STGFCAACHNC) the chain is on the extracellular side. Intrachain disulfides connect Cys71/Cys159, Cys74/Cys146, and Cys77/Cys166. A helical membrane pass occupies residues 78 to 100 (LFFACFVLVLTQSSIFSLLAIAI). At 101–120 (DRYIAIRIPLRYNGLVTGTR) the chain is on the cytoplasmic side. A helical membrane pass occupies residues 121–143 (AKGIIAVCWVLSFAIGLTPMLGW). Residues 144 to 173 (NNCSQPKEGRNYSQGCGEGQVACLFEDVVP) are Extracellular-facing. N-linked (GlcNAc...) asparagine glycans are attached at residues Asn145 and Asn154. Glu169 contributes to the adenosine binding site. A helical membrane pass occupies residues 174–198 (MNYMVYYNFFAFVLVPLLLMLGVYL). At 199–234 (RIFLAARRQLKQMESQPLPGERARSTLQKEVHAAKS) the chain is on the cytoplasmic side. Residues 235–258 (LAIIVGLFALCWLPLHIINCFTFF) form a helical membrane-spanning segment. Asn253 lines the adenosine pocket. A disulfide bond links Cys259 and Cys262. At 259 to 266 (CPECSHAP) the chain is on the extracellular side. A helical transmembrane segment spans residues 267 to 290 (LWLMYLTIVLSHTNSVVNPFIYAY). Adenosine-binding residues include Ser277 and His278. Over 291–412 (RIREFRQTFR…PLAQDGAGVS (122 aa)) the chain is Cytoplasmic. Residues 392–412 (GACPESPGLEGPLAQDGAGVS) form a disordered region.

Belongs to the G-protein coupled receptor 1 family. As to quaternary structure, interacts (via cytoplasmic C-terminal domain) with USP4; the interaction is direct. May interact with DRD4. Interacts with NECAB2. Interacts (via cytoplasmic C-terminal domain) with GAS2L2; interaction enhances receptor-mediated adenylyl cyclase activity. Post-translationally, ubiquitinated. Deubiquitinated by USP4; leading to stabilization and expression at the cell surface.

Its subcellular location is the cell membrane. Functionally, receptor for adenosine. The activity of this receptor is mediated by G proteins which activate adenylyl cyclase. The polypeptide is Adenosine receptor A2a (ADORA2A) (Canis lupus familiaris (Dog)).